Here is a 117-residue protein sequence, read N- to C-terminus: Immunoglobulin heavy variable 1-69-2 (117 aa).

An N-terminal signal peptide occupies residues 1 to 19; it reads MDCTWRILLLVAAATGTHA. The framework-1 stretch occupies residues 20-44; the sequence is EVQLVQSGAEVKKPGATVKISCKVS. The region spanning 20–117 is the Ig-like domain; the sequence is EVQLVQSGAE…EDTAVYYCAT (98 aa). A disulfide bridge links Cys41 with Cys115. Positions 45 to 52 are complementarity-determining-1; it reads GYTFTDYY. Positions 53 to 69 are framework-2; the sequence is MHWVQQAPGKGLEWMGL. Residues 70 to 77 are complementarity-determining-2; it reads VDPEDGET. A framework-3 region spans residues 78-115; the sequence is IYAEKFQGRVTITADTSTDTAYMELSSLRSEDTAVYYC. The segment at 116-117 is complementarity-determining-3; the sequence is AT.

As to quaternary structure, immunoglobulins are composed of two identical heavy chains and two identical light chains; disulfide-linked.

It is found in the secreted. It localises to the cell membrane. Its function is as follows. V region of the variable domain of immunoglobulin heavy chains that participates in the antigen recognition. Immunoglobulins, also known as antibodies, are membrane-bound or secreted glycoproteins produced by B lymphocytes. In the recognition phase of humoral immunity, the membrane-bound immunoglobulins serve as receptors which, upon binding of a specific antigen, trigger the clonal expansion and differentiation of B lymphocytes into immunoglobulins-secreting plasma cells. Secreted immunoglobulins mediate the effector phase of humoral immunity, which results in the elimination of bound antigens. The antigen binding site is formed by the variable domain of one heavy chain, together with that of its associated light chain. Thus, each immunoglobulin has two antigen binding sites with remarkable affinity for a particular antigen. The variable domains are assembled by a process called V-(D)-J rearrangement and can then be subjected to somatic hypermutations which, after exposure to antigen and selection, allow affinity maturation for a particular antigen. This chain is Immunoglobulin heavy variable 1-69-2, found in Homo sapiens (Human).